The sequence spans 217 residues: MNQTLLSDFGTPVERVERAIDALRNGRGVMVLDDESRENEGDMVFAAEAMTVEQMALTIRHGSGIVCLCITDERRQQLDLPMMVANNSSQFQTAFTVTIEAAKGVTTGVSAADRLTTIRAAIADNAKPTDLNRPGHVFPLRGQPGGVLSRRGHTEASIDLATLAGYKPAGVLCELTNDDGSMAHAPEVIEFAKLHDMPVVTIDDLAEYRQSQEKKAS.

D-ribulose 5-phosphate is bound by residues 37–38, Asp-42, 150–154, and Glu-174; these read RE and RRGHT. Mg(2+) is bound at residue Glu-38. A Mg(2+)-binding site is contributed by His-153.

Belongs to the DHBP synthase family. As to quaternary structure, homodimer. Mg(2+) is required as a cofactor. The cofactor is Mn(2+).

It carries out the reaction D-ribulose 5-phosphate = (2S)-2-hydroxy-3-oxobutyl phosphate + formate + H(+). Its pathway is cofactor biosynthesis; riboflavin biosynthesis; 2-hydroxy-3-oxobutyl phosphate from D-ribulose 5-phosphate: step 1/1. In terms of biological role, catalyzes the conversion of D-ribulose 5-phosphate to formate and 3,4-dihydroxy-2-butanone 4-phosphate. The protein is 3,4-dihydroxy-2-butanone 4-phosphate synthase of Yersinia enterocolitica serotype O:8 / biotype 1B (strain NCTC 13174 / 8081).